Here is a 36-residue protein sequence, read N- to C-terminus: Peptide POLARIS (36 aa).

It belongs to the POLARIS peptide family. In terms of tissue distribution, mostly expressed in the embryonic root from the heart stage and in the seedling primary and lateral root tips, especially in the columella initials and lateral root cap. Also detectable in aerial parts of the seedling, sepals and leaves, principally in vascular tissues of the lamina and petiole.

Its function is as follows. Required for correct root growth and vascular development, probably by modulating both cell division rate in meristems and cell elongation in roots. Negative regulator of the ethylene signaling pathway that modulates microtubule cytoskeleton dynamics and auxin transport and homeostasis, and possibly cytokinin signaling, thus influencing root growth and lateral root development. In Arabidopsis thaliana (Mouse-ear cress), this protein is Peptide POLARIS (PLS).